The chain runs to 51 residues: Large ribosomal subunit protein eL39 (51 aa).

Belongs to the eukaryotic ribosomal protein eL39 family.

In Methanosarcina barkeri (strain Fusaro / DSM 804), this protein is Large ribosomal subunit protein eL39.